Here is a 103-residue protein sequence, read N- to C-terminus: Large ribosomal subunit protein bL21 (103 aa).

It belongs to the bacterial ribosomal protein bL21 family. As to quaternary structure, part of the 50S ribosomal subunit. Contacts protein L20.

In terms of biological role, this protein binds to 23S rRNA in the presence of protein L20. The protein is Large ribosomal subunit protein bL21 of Thiobacillus denitrificans (strain ATCC 25259 / T1).